Here is a 157-residue protein sequence, read N- to C-terminus: Endoribonuclease YbeY (157 aa).

Zn(2+) contacts are provided by histidine 122, histidine 126, and histidine 132.

It belongs to the endoribonuclease YbeY family. Zn(2+) is required as a cofactor.

Its subcellular location is the cytoplasm. Single strand-specific metallo-endoribonuclease involved in late-stage 70S ribosome quality control and in maturation of the 3' terminus of the 16S rRNA. In Bacillus velezensis (strain DSM 23117 / BGSC 10A6 / LMG 26770 / FZB42) (Bacillus amyloliquefaciens subsp. plantarum), this protein is Endoribonuclease YbeY.